The sequence spans 473 residues: SHC-transforming protein 1 (473 aa).

The tract at residues 1-26 (MNKLSGGGGRRTRVEGGQLGGEEWTR) is disordered. At S29 the chain carries Phosphoserine. K44 is modified (N6-acetyllysine). Residues 46–229 (MGPGVSYLVR…AGFDGSAWDE (184 aa)) enclose the PID domain. Residues 216 to 314 (HDRMAGFDGS…PSSGRELFDD (99 aa)) form a disordered region. A CH1 region spans residues 230–377 (EEEEPPDHQY…AMAEQLRGEP (148 aa)). Y239, Y240, and Y317 each carry phosphotyrosine. The tract at residues 328-348 (QAGAGAGPPNPTINGSAPRDL) is disordered. S343 is subject to Phosphoserine. Residues 378–469 (WFHGKLSRRE…GSELCLQQPV (92 aa)) form the SH2 domain.

Interacts with CPNE3; this interaction may mediate the binding of CPNE3 with ERBB2. Interacts with the Trk receptors NTRK1, NTRK2 and NTRK3; in a phosphotyrosine-dependent manner. Interacts with the NPXY motif of tyrosine-phosphorylated IGF1R and INSR in vitro via the PID domain. Once activated, binds to GRB2. Interacts with tyrosine-phosphorylated CD3T and DDR2. Interacts with the N-terminal region of APS. Interacts with phosphorylated LRP1 and IRS4. Interacts with INPP5D/SHIP1 and INPPL1/SHIP2. Interacts with ALK, GAB2, GRB7 and KIT. Interacts with PTPN6/SHP (tyrosine phosphorylated). Identified in a complex containing FGFR4, NCAM1, CDH2, PLCG1, FRS2, SRC, SHC1, GAP43 and CTTN. Interacts with FLT4 (tyrosine-phosphorylated). Interacts with EPHB1 and GRB2; activates the MAPK/ERK cascade to regulate cell migration. Interacts with PDGFRB (tyrosine-phosphorylated). Interacts with ERBB4. Interacts with TEK/TIE2 (tyrosine-phosphorylated). Interacts with PTK2/FAK1. Interacts with CEACAM1; this interaction is CEACAM1-phosphorylation-dependent and mediates interaction with EGFR or INSR resulting in decrease coupling of SHC1 to the MAPK3/ERK1-MAPK1/ERK2 pathway. Interacts (via PID domain) with PEAK1 (when phosphorylated). Found in a complex with PPP1CA, PPP1CC, SHC1 and PEAK1. Post-translationally, phosphorylated by activated epidermal growth factor receptor. Phosphorylated in response to KIT signaling. Tyrosine phosphorylated in response to FLT3 and FLT4 signaling and by ligand-activated ALK. Tyrosine phosphorylated by ligand-activated PDGFRB. Tyrosine phosphorylated by TEK/TIE2. May be tyrosine phosphorylated by activated PTK2/FAK1. Tyrosine phosphorylated by activated PTK2B/PYK2. Dephosphorylation by PTPN2 may regulate interaction with GRB2.

The protein localises to the cytoplasm. Its subcellular location is the cell junction. It localises to the focal adhesion. Functionally, signaling adapter that couples activated growth factor receptors to signaling pathways. Participates in a signaling cascade initiated by activated KIT and KITLG/SCF. Participates in signaling downstream of the angiopoietin receptor TEK/TIE2, and plays a role in the regulation of endothelial cell migration and sprouting angiogenesis. The protein is SHC-transforming protein 1 (SHC1) of Bos taurus (Bovine).